The sequence spans 358 residues: DNA methyltransferase CcrM (358 aa).

The tract at residues 1-260 (MKFGPETIIH…AKVVPIAPED (260 aa)) is methyltransferase. DNA-binding regions (target strand DNA) lie at residues 31–34 (DPPY) and 39–45 (GGDLLRP). 2 DNA-binding regions (non-target strand DNA) span residues 93-94 (YH) and 109-110 (WI). H94 is a dsDNA binding site. The segment at residues 122–132 (MPNFKGTRFAN) is a DNA-binding region (target strand DNA). The segment at residues 153-157 (YDALK) is a DNA-binding region (non-target strand DNA). DsDNA-binding residues include Q164 and R179. Positions 187–193 (KAHPTQK) form a DNA-binding region, target strand DNA. In terms of domain architecture, RAMA spans 259–355 (EDLDVMGSKR…IDVLRAQVRA (97 aa)). Residues 261 to 270 (LDVMGSKRAE) form a linker region. DsDNA contacts are provided by K267 and R272. The non-specific DNA-binding stretch occupies residues 272 to 358 (RVPFGTIVEA…LRAQVRAGMN (87 aa)). 2 DNA-binding regions (non-target strand DNA) span residues 315–317 (SIH) and 330–332 (NGW). R350 contributes to the dsDNA binding site.

This sequence belongs to the N(4)/N(6)-methyltransferase family. Homodimer. Post-translationally, rapidly degraded by Lon protease prior to cell division.

The enzyme catalyses a 2'-deoxyadenosine in DNA + S-adenosyl-L-methionine = an N(6)-methyl-2'-deoxyadenosine in DNA + S-adenosyl-L-homocysteine + H(+). In terms of biological role, a beta subtype methylase that recognizes the double-stranded sequence 5'-GANTC-3' and methylates non-modifed A-2 on the hemimethylated, post-replicative DNA. Opens a bubble in the DNA at the recognition site, allowing precise recognition of the sequence and ensuring enzyme specificity. Functions only in the predivisional cell. Responsible for 5'-GANTC-3' methylation in the cell; methylation of hemimethylated sites generated after replication fork passage occurs late in the predivisional cell, near completion of chromosome replication but prior to cell division. Contributes to the accurate cell-cycle control of DNA replication and cellular morphology. This chain is DNA methyltransferase CcrM (ccrMIM), found in Caulobacter vibrioides (strain ATCC 19089 / CIP 103742 / CB 15) (Caulobacter crescentus).